The following is a 41-amino-acid chain: Pathogenesis-related protein (41 aa).

The protein belongs to the CRISP family.

Probably involved in the defense reaction of plants against pathogens. The sequence is that of Pathogenesis-related protein from Cucumis melo (Muskmelon).